The chain runs to 420 residues: RING finger protein 39 (420 aa).

The segment at 88–135 (CPLCGGSFEDPVLLACEHSFCRACLARRWGTPPATGTEASPTACPCCG) adopts an RING-type zinc-finger fold. The B30.2/SPRY domain maps to 210-420 (DDLPEDYPVV…APLRIVPAES (211 aa)).

In terms of tissue distribution, expressed in testis.

It localises to the cytoplasm. The catalysed reaction is S-ubiquitinyl-[E2 ubiquitin-conjugating enzyme]-L-cysteine + [acceptor protein]-L-lysine = [E2 ubiquitin-conjugating enzyme]-L-cysteine + N(6)-ubiquitinyl-[acceptor protein]-L-lysine.. Its pathway is protein modification; protein ubiquitination. In terms of biological role, plays an inhibitory role in anti-RNA viral innate immunity by targeting the adapter DDX3X and promoting its 'Lys-48'-linked polyubiquitination. Alternatively, enhances the cGAS-STING pathway activation by promoting 'Lys-63'-linked ubiquitination of STING1, facilitating the STING1-TBK1 complex formation and STING1 activation. Functionally, (Microbial infection) Plays a positive role in human immunodeficiency virus (HIV-1) replication. This is RING finger protein 39 (RNF39) from Homo sapiens (Human).